Consider the following 109-residue polypeptide: MSAQPVDIQIFGRTLRVNCPPEQQEALNQAAEDLNQRLQNLKVRTRVTNTEQLVFIAALNVCHELAQERLKTRDYAANMEQRIRLLQQTIEQALVEQGRITERPGNQFE.

Residues 21 to 97 (PEQQEALNQA…QTIEQALVEQ (77 aa)) are a coiled coil.

The protein belongs to the ZapA family. Type 1 subfamily. As to quaternary structure, homodimer. Interacts with FtsZ.

The protein localises to the cytoplasm. Activator of cell division through the inhibition of FtsZ GTPase activity, therefore promoting FtsZ assembly into bundles of protofilaments necessary for the formation of the division Z ring. It is recruited early at mid-cell but it is not essential for cell division. The sequence is that of Cell division protein ZapA from Sodalis glossinidius (strain morsitans).